A 125-amino-acid polypeptide reads, in one-letter code: Small ribosomal subunit protein bS6m (125 aa).

This sequence belongs to the bacterial ribosomal protein bS6 family. Component of the mitochondrial ribosome small subunit (28S) which comprises a 12S rRNA and about 30 distinct proteins.

The protein localises to the mitochondrion. This chain is Small ribosomal subunit protein bS6m (Mrps6), found in Mus musculus (Mouse).